A 146-amino-acid chain; its full sequence is MVRRGAMVLLTMLILYAAPSFALYGLADFMSFVYVGAIMIVAFGVYIILGRSKKPGFKEMLAVMLISALTAIFLAYFFSGSEVIVPKLKSLGLFAVVAAMLLALARVFRLEAEADFSLRFFLKWILVVAITFTILSVFMLFLRGVV.

Transmembrane regions (helical) follow at residues 5 to 27 (GAMV…YGLA), 32 to 49 (FVYV…YIIL), 61 to 80 (LAVM…FFSG), 90 to 108 (SLGL…ARVF), and 120 to 142 (FFLK…MLFL).

It localises to the cell membrane. This is an uncharacterized protein from Archaeoglobus fulgidus (strain ATCC 49558 / DSM 4304 / JCM 9628 / NBRC 100126 / VC-16).